The chain runs to 2124 residues: Genome polyprotein (2124 aa).

Glycine 2 carries the N-myristoyl glycine; by host lipid modification. The interval 873–880 (VARDLLLI) is host EIF4E binding. Positions 1102-1264 (VQIATYFRNF…SAATKNGKLD (163 aa)) constitute an SF3 helicase domain. 1130–1137 (GKPGVGKS) contributes to the ATP binding site. The segment covering 1415–1437 (DKPKEEEEEPEEKKEKKTEESKE) has biased composition (basic and acidic residues). Residues 1415 to 1446 (DKPKEEEEEPEEKKEKKTEESKEAAGPYNGPT) are disordered. O-(5'-phospho-RNA)-tyrosine is present on tyrosine 1442. The region spanning 1459 to 1648 (SPLMDMEKKI…VGTRLTARMI (190 aa)) is the Peptidase C3 domain. Residues histidine 1501, aspartate 1535, and cysteine 1612 each act as for protease 3C activity in the active site. The region spanning 1893–2011 (PYLYDFDYSN…ASKFELDLVM (119 aa)) is the RdRp catalytic domain. Residues aspartate 1899 and aspartate 1997 each act as for RdRp activity in the active site.

Belongs to the picornaviruses polyprotein family. In terms of assembly, interacts with host EIF4E. Interacts with host IFIH1/MDA5; this interaction inhibits the induction of the IFN-beta signal pathway. Specific enzymatic cleavages by the viral protease in vivo yield a variety of precursors and mature proteins. The polyprotein seems to be cotranslationally cleaved at the 2A/2B junction by a ribosomal skip from one codon to the next without formation of a peptide bond. This process would release the P1-2A peptide from the translational complex. Post-translationally, during virion maturation, immature virions are rendered infectious following cleavage of VP0 into VP4 and VP2. This maturation seems to be an autocatalytic event triggered by the presence of RNA in the capsid and is followed by a conformational change of the particle. In terms of processing, myristoylation is required during RNA encapsidation and formation of the mature virus particle. Uridylylated by the polymerase and is covalently linked to the 5'-end of genomic RNA. This uridylylated form acts as a nucleotide-peptide primer for the polymerase.

The protein localises to the virion. It is found in the host cytoplasm. The protein resides in the host nucleus. It localises to the host nucleolus. Its subcellular location is the host cytoplasmic vesicle membrane. It carries out the reaction RNA(n) + a ribonucleoside 5'-triphosphate = RNA(n+1) + diphosphate. The enzyme catalyses ATP + H2O = ADP + phosphate + H(+). It catalyses the reaction Selective cleavage of Gln-|-Gly bond in the poliovirus polyprotein. In other picornavirus reactions Glu may be substituted for Gln, and Ser or Thr for Gly.. In terms of biological role, forms an icosahedral capsid of pseudo T=3 symmetry with capsid proteins VP2 and VP3. Together they form an icosahedral capsid composed of 60 copies of each VP1, VP2, and VP3, with a diameter of approximately 300 Angstroms. VP4 lies on the inner surface of the protein shell formed by VP1, VP2 and VP3. All the three latter proteins contain a beta-sheet structure called beta-barrel jelly roll. VP1 is situated at the 12 fivefold axes, whereas VP2 and VP3 are located at the quasi-sixfold axes. Its function is as follows. Lies on the inner surface of the capsid shell. After binding to the host receptor, the capsid undergoes conformational changes. Capsid protein VP4 is released, capsid protein VP1 N-terminus is externalized, and together, they shape a pore in the host membrane through which the viral genome is translocated into the host cell cytoplasm. After genome has been released, the channel shrinks. Functionally, VP0 precursor is a component of immature procapsids. Involved in host translation shutoff by inhibiting cap-dependent mRNA translation. Nuclear localization is required for this function. The resulting inhibition of cellular protein synthesis serves to ensure maximal viral gene expression and to evade host immune response. In terms of biological role, affects membrane integrity and causes an increase in membrane permeability. Its function is as follows. Associates with and induces structural rearrangements of intracellular membranes. It displays RNA-binding, nucleotide binding and NTPase activities. Interacts with IFIH1/MDA5 to inhibit the induction of the IFN-beta signal pathway. Functionally, serves as membrane anchor via its hydrophobic domain. Forms a primer, VPg-pU, which is utilized by the polymerase for the initiation of RNA chains. In terms of biological role, cysteine protease that generates mature viral proteins from the precursor polyprotein. In addition to its proteolytic activity, it binds to viral RNA, and thus influences viral genome replication. RNA and substrate cooperatively bind to the protease. Cleaves host PABP1, this cleavage is important for viral replication. Cleaves host TANK and disrupts the TANK-TBK1-IKKepsilon-IRF3 complex, thereby inhibiting the induction of the IFN-beta signal pathway. Its function is as follows. Replicates the genomic and antigenomic RNAs by recognizing replications specific signals. Performs VPg uridylylation. This chain is Genome polyprotein, found in Cosavirus A (isolate Human/Pakistan/0553/-) (HCoSV-A).